The sequence spans 190 residues: Crossover junction endodeoxyribonuclease RuvC (190 aa).

Catalysis depends on residues Asp-8, Glu-67, and Asp-139. Residues Asp-8, Glu-67, and Asp-139 each coordinate Mg(2+).

It belongs to the RuvC family. As to quaternary structure, homodimer which binds Holliday junction (HJ) DNA. The HJ becomes 2-fold symmetrical on binding to RuvC with unstacked arms; it has a different conformation from HJ DNA in complex with RuvA. In the full resolvosome a probable DNA-RuvA(4)-RuvB(12)-RuvC(2) complex forms which resolves the HJ. It depends on Mg(2+) as a cofactor.

The protein localises to the cytoplasm. It catalyses the reaction Endonucleolytic cleavage at a junction such as a reciprocal single-stranded crossover between two homologous DNA duplexes (Holliday junction).. The RuvA-RuvB-RuvC complex processes Holliday junction (HJ) DNA during genetic recombination and DNA repair. Endonuclease that resolves HJ intermediates. Cleaves cruciform DNA by making single-stranded nicks across the HJ at symmetrical positions within the homologous arms, yielding a 5'-phosphate and a 3'-hydroxyl group; requires a central core of homology in the junction. The consensus cleavage sequence is 5'-(A/T)TT(C/G)-3'. Cleavage occurs on the 3'-side of the TT dinucleotide at the point of strand exchange. HJ branch migration catalyzed by RuvA-RuvB allows RuvC to scan DNA until it finds its consensus sequence, where it cleaves and resolves the cruciform DNA. The chain is Crossover junction endodeoxyribonuclease RuvC from Haemophilus influenzae (strain PittEE).